Here is a 562-residue protein sequence, read N- to C-terminus: Oxygen-dependent choline dehydrogenase (562 aa).

Position 4 to 33 (4 to 33 (DYIIIGAGSAGNVLATRLTEDPNTTVLLLE)) interacts with FAD. His473 (proton acceptor) is an active-site residue.

It belongs to the GMC oxidoreductase family. FAD is required as a cofactor.

It catalyses the reaction choline + A = betaine aldehyde + AH2. The enzyme catalyses betaine aldehyde + NAD(+) + H2O = glycine betaine + NADH + 2 H(+). It functions in the pathway amine and polyamine biosynthesis; betaine biosynthesis via choline pathway; betaine aldehyde from choline (cytochrome c reductase route): step 1/1. Its function is as follows. Involved in the biosynthesis of the osmoprotectant glycine betaine. Catalyzes the oxidation of choline to betaine aldehyde and betaine aldehyde to glycine betaine at the same rate. This chain is Oxygen-dependent choline dehydrogenase, found in Escherichia coli O45:K1 (strain S88 / ExPEC).